Here is a 194-residue protein sequence, read N- to C-terminus: 3-isopropylmalate dehydratase small subunit (194 aa).

This sequence belongs to the LeuD family. LeuD type 1 subfamily. Heterodimer of LeuC and LeuD.

It catalyses the reaction (2R,3S)-3-isopropylmalate = (2S)-2-isopropylmalate. It functions in the pathway amino-acid biosynthesis; L-leucine biosynthesis; L-leucine from 3-methyl-2-oxobutanoate: step 2/4. Its function is as follows. Catalyzes the isomerization between 2-isopropylmalate and 3-isopropylmalate, via the formation of 2-isopropylmaleate. This Anoxybacillus flavithermus (strain DSM 21510 / WK1) protein is 3-isopropylmalate dehydratase small subunit.